Consider the following 175-residue polypeptide: Putative metal-dependent hydrolase BPUM_0784 (175 aa).

3 residues coordinate Zn(2+): His-65, His-157, and His-161.

It belongs to the metal hydrolase YfiT family. Homodimer. Zn(2+) is required as a cofactor.

The protein resides in the cytoplasm. In terms of biological role, possible metal-dependent hydrolase. This chain is Putative metal-dependent hydrolase BPUM_0784, found in Bacillus pumilus (strain SAFR-032).